A 151-amino-acid polypeptide reads, in one-letter code: MSIIQNRKAFHDYFIEEKLEAGLVLEGWEVKAIRAGRVQLKESYVDWKNGAFWLIGCHITPLQSASTHVKPDPVRPRKLLMSQAEINRFIGKVERAGYTMMALDLHYTKGNVKAEVGLAKGKKLHDKRDTEKDREWQREKQRVMKNQRGAA.

The interval glycine 121–alanine 151 is disordered. A compositionally biased stretch (basic and acidic residues) spans aspartate 126–arginine 142.

It belongs to the SmpB family.

The protein localises to the cytoplasm. Functionally, required for rescue of stalled ribosomes mediated by trans-translation. Binds to transfer-messenger RNA (tmRNA), required for stable association of tmRNA with ribosomes. tmRNA and SmpB together mimic tRNA shape, replacing the anticodon stem-loop with SmpB. tmRNA is encoded by the ssrA gene; the 2 termini fold to resemble tRNA(Ala) and it encodes a 'tag peptide', a short internal open reading frame. During trans-translation Ala-aminoacylated tmRNA acts like a tRNA, entering the A-site of stalled ribosomes, displacing the stalled mRNA. The ribosome then switches to translate the ORF on the tmRNA; the nascent peptide is terminated with the 'tag peptide' encoded by the tmRNA and targeted for degradation. The ribosome is freed to recommence translation, which seems to be the essential function of trans-translation. In Chromobacterium violaceum (strain ATCC 12472 / DSM 30191 / JCM 1249 / CCUG 213 / NBRC 12614 / NCIMB 9131 / NCTC 9757 / MK), this protein is SsrA-binding protein.